The sequence spans 148 residues: UPF0178 protein lpp0103 (148 aa).

It belongs to the UPF0178 family.

The polypeptide is UPF0178 protein lpp0103 (Legionella pneumophila (strain Paris)).